The following is a 314-amino-acid chain: DNA-directed RNA polymerase subunit alpha (314 aa).

Residues 1 to 228 (MIEFEKPKIH…EHLAIFVNLN (228 aa)) form an alpha N-terminal domain (alpha-NTD) region. An alpha C-terminal domain (alpha-CTD) region spans residues 245 to 314 (KEKMLEMTIE…LLGLGFRSED (70 aa)).

It belongs to the RNA polymerase alpha chain family. In terms of assembly, homodimer. The RNAP catalytic core consists of 2 alpha, 1 beta, 1 beta' and 1 omega subunit. When a sigma factor is associated with the core the holoenzyme is formed, which can initiate transcription.

The enzyme catalyses RNA(n) + a ribonucleoside 5'-triphosphate = RNA(n+1) + diphosphate. DNA-dependent RNA polymerase catalyzes the transcription of DNA into RNA using the four ribonucleoside triphosphates as substrates. In Pediococcus pentosaceus (strain ATCC 25745 / CCUG 21536 / LMG 10740 / 183-1w), this protein is DNA-directed RNA polymerase subunit alpha.